We begin with the raw amino-acid sequence, 483 residues long: Phloretin 2'-O-glucosyltransferase (483 aa).

The Proton acceptor role is filled by His15. His15 lines the an anthocyanidin pocket. The active-site Charge relay is the Asp118. The UDP-alpha-D-glucose site is built by Thr140, Ala360, Gln362, His377, Trp380, Asn381, Ser382, and Glu385. Ala400 is an an anthocyanidin binding site. Positions 401 and 402 each coordinate UDP-alpha-D-glucose.

The protein belongs to the UDP-glycosyltransferase family. Highly expressed in roots and at lower levels in leaves, flowers and fruits.

The catalysed reaction is phloretin + UDP-alpha-D-glucose = phlorizin + UDP + H(+). Its function is as follows. Glycosyltransferase that possesses phloretin 2'-O-glycosyltransferase activity. Converts phloretin to phlorizin (phloretin 2'-O-glucoside), a potent antioxidant. Is specific for phloretin and does not possess glycosyltransferase activity toward caffeic acid, catechin, chlorogenic acid, 2-coumaric acid, 3-coumaric acid, 4-coumaric acid, cyanidin, 3,4-dihydroxyhydrocinnamic acid, epicatechin, 3-hydroxybenzoic acid, naringenin, 3,4-dihydroxybenzoic acid, quercetin and rutin. Can glycosylate phloretin in the presence of UDP-glucose, UDP-xylose and UDP-galactose. This is Phloretin 2'-O-glucosyltransferase from Malus domestica (Apple).